We begin with the raw amino-acid sequence, 320 residues long: Cytochrome c biogenesis protein CcsA (320 aa).

8 helical membrane passes run 15–35 (FSIV…DEII), 43–63 (KGMI…WIYS), 71–91 (LYES…VPYF), 98–118 (LSTI…SGLL), 143–163 (MILS…LLVI), 224–244 (VISL…VWAN), 251–271 (WNWD…AIYL), and 285–305 (AIVA…VNLL).

Belongs to the CcmF/CycK/Ccl1/NrfE/CcsA family. May interact with Ccs1.

It is found in the plastid. The protein resides in the chloroplast thylakoid membrane. In terms of biological role, required during biogenesis of c-type cytochromes (cytochrome c6 and cytochrome f) at the step of heme attachment. The polypeptide is Cytochrome c biogenesis protein CcsA (Panax ginseng (Korean ginseng)).